A 278-amino-acid chain; its full sequence is Orotidine 5'-phosphate decarboxylase (278 aa).

Lys95 (proton donor) is an active-site residue.

This sequence belongs to the OMP decarboxylase family. Type 2 subfamily.

The enzyme catalyses orotidine 5'-phosphate + H(+) = UMP + CO2. It participates in pyrimidine metabolism; UMP biosynthesis via de novo pathway; UMP from orotate: step 2/2. The polypeptide is Orotidine 5'-phosphate decarboxylase (Methylibium petroleiphilum (strain ATCC BAA-1232 / LMG 22953 / PM1)).